The sequence spans 620 residues: Glutathione-regulated potassium-efflux system protein KefC (620 aa).

The Periplasmic segment spans residues 1–3 (MDS). A helical transmembrane segment spans residues 4–24 (HTLLQALIYLGSAALIVPIAV). Residue R25 is a topological domain, cytoplasmic. Residues 26-46 (LGLGSVLGYLIAGCIIGPWGL) form a helical membrane-spanning segment. Over 47–53 (RLVTDAE) the chain is Periplasmic. A helical transmembrane segment spans residues 54–74 (SILHFAEIGVVLMLFVIGLEL). The Cytoplasmic portion of the chain corresponds to 75–89 (DPQRLWKLRASVFGG). The helical transmembrane segment at 90–110 (GALQMVVCGGLIGLFCMFLGL) threads the bilayer. The Periplasmic portion of the chain corresponds to 111 to 113 (RWQ). A helical transmembrane segment spans residues 114–134 (VAELIGMTLALSSTAIAMQAM). Topologically, residues 135-148 (NERNLTVSQVGRSA) are cytoplasmic. A helical transmembrane segment spans residues 149-169 (FAVLLFQDIAAIPLVAMIPLL). Residues 170 to 177 (AASGASTT) are Periplasmic-facing. The helical transmembrane segment at 178 to 198 (LGAFALSALKVAGALALVVLL) threads the bilayer. Residues 199 to 213 (GRYVTRPALRFVARS) are Cytoplasmic-facing. Residues 214–233 (GLREVFSAVALFLVFGFGLL) traverse the membrane as a helical segment. The Periplasmic segment spans residues 234 to 236 (LEE). Residues 237-254 (VGLSMAMGAFLAGVLLAS) form a helical membrane-spanning segment. Residues 255–269 (SEYRHALESDIEPFK) lie on the Cytoplasmic side of the membrane. Residues 270-290 (GLLLGLFFIGVGMSIDFGTLV) form a helical membrane-spanning segment. Residues 291 to 293 (ENP) lie on the Periplasmic side of the membrane. Residues 294 to 314 (LRILLLLAGFLAIKIVMLWLV) form a helical membrane-spanning segment. The Cytoplasmic portion of the chain corresponds to 315–326 (ARTLGVPAKQRR). Residues 327–347 (WFAVLLGQGSEFAFVVFGAAQ) traverse the membrane as a helical segment. Residues 348 to 358 (MADVLEPEWAK) are Periplasmic-facing. Residues 359-379 (ALTLAVALSMAATPIFLVLLT) traverse the membrane as a helical segment. Residues 380–620 (RMEKTATGEA…ADEPEVKPSI (241 aa)) are Cytoplasmic-facing. One can recognise an RCK N-terminal domain in the interval 399-518 (QPRVIVAGFG…AGVAMPERET (120 aa)). The disordered stretch occupies residues 599–620 (QGTAEGKHSGKAADEPEVKPSI). A compositionally biased stretch (basic and acidic residues) spans 603-620 (EGKHSGKAADEPEVKPSI).

It belongs to the monovalent cation:proton antiporter 2 (CPA2) transporter (TC 2.A.37) family. KefC subfamily. In terms of assembly, homodimer. Interacts with the regulatory subunit KefF.

It localises to the cell inner membrane. In terms of biological role, pore-forming subunit of a potassium efflux system that confers protection against electrophiles. Catalyzes K(+)/H(+) antiport. The chain is Glutathione-regulated potassium-efflux system protein KefC from Salmonella typhi.